Reading from the N-terminus, the 447-residue chain is Tryptophan 5-hydroxylase 1 (447 aa).

In terms of domain architecture, ACT spans 22–97 (TLIFSLENEV…TVLSVDSPDQ (76 aa)). Ser61 carries the post-translational modification Phosphoserine; by PKA. L-tryptophan is bound by residues Tyr238, Arg260, and Thr268. Residues His275, His280, and Glu320 each contribute to the Fe cation site. L-tryptophan-binding residues include Ser339 and Ile369.

This sequence belongs to the biopterin-dependent aromatic amino acid hydroxylase family. As to quaternary structure, homotetramer. Interacts with DNAJC12. It depends on Fe(2+) as a cofactor. Ubiquitinated, leading to its degradation by the proteasome. Ubiquitinated is triggered by phosphorylation. In terms of processing, phosphorylated; triggering degradation by the proteasome.

It catalyses the reaction (6R)-L-erythro-5,6,7,8-tetrahydrobiopterin + L-tryptophan + O2 = 5-hydroxy-L-tryptophan + (4aS,6R)-4a-hydroxy-L-erythro-5,6,7,8-tetrahydrobiopterin. Its pathway is aromatic compound metabolism; serotonin biosynthesis; serotonin from L-tryptophan: step 1/2. Its function is as follows. Oxidizes L-tryptophan to 5-hydroxy-l-tryptophan in the rate-determining step of serotonin biosynthesis. The sequence is that of Tryptophan 5-hydroxylase 1 from Mus musculus (Mouse).